A 268-amino-acid chain; its full sequence is Large ribosomal subunit protein bL9m (268 aa).

Residues 1 to 52 (MAAAAFAVPRGVQLRVLTERLLRGGVRELLRPRLSGSTPGSERDFSLSHSRG) constitute a mitochondrion transit peptide.

Belongs to the bacterial ribosomal protein bL9 family. Component of the mitochondrial ribosome large subunit (39S) which comprises a 16S rRNA and about 50 distinct proteins.

Its subcellular location is the mitochondrion. In Bos taurus (Bovine), this protein is Large ribosomal subunit protein bL9m (MRPL9).